The chain runs to 184 residues: ATP synthase subunit b, chloroplastic (184 aa).

A helical membrane pass occupies residues 27-49 (LATNPINLSVVFGVLIFFGKGVL).

This sequence belongs to the ATPase B chain family. In terms of assembly, F-type ATPases have 2 components, F(1) - the catalytic core - and F(0) - the membrane proton channel. F(1) has five subunits: alpha(3), beta(3), gamma(1), delta(1), epsilon(1). F(0) has four main subunits: a(1), b(1), b'(1) and c(10-14). The alpha and beta chains form an alternating ring which encloses part of the gamma chain. F(1) is attached to F(0) by a central stalk formed by the gamma and epsilon chains, while a peripheral stalk is formed by the delta, b and b' chains.

The protein resides in the plastid. Its subcellular location is the chloroplast thylakoid membrane. In terms of biological role, f(1)F(0) ATP synthase produces ATP from ADP in the presence of a proton or sodium gradient. F-type ATPases consist of two structural domains, F(1) containing the extramembraneous catalytic core and F(0) containing the membrane proton channel, linked together by a central stalk and a peripheral stalk. During catalysis, ATP synthesis in the catalytic domain of F(1) is coupled via a rotary mechanism of the central stalk subunits to proton translocation. Its function is as follows. Component of the F(0) channel, it forms part of the peripheral stalk, linking F(1) to F(0). The chain is ATP synthase subunit b, chloroplastic from Draba nemorosa (Woodland whitlowgrass).